The chain runs to 408 residues: G patch domain-containing protein 4 (408 aa).

An N-acetylmethionine modification is found at M1. T4 bears the Phosphothreonine mark. The G-patch domain occupies 11–57 (GMKFAEEQLLKHGWTQGKGLGRKENGITQALRVTLKQDTYGVGHDPA). A Glycyl lysine isopeptide (Lys-Gly) (interchain with G-Cter in SUMO2) cross-link involves residue K46. Position 116 is a phosphothreonine (T116). Disordered stretches follow at residues 116-141 (TSSG…KPPN) and 187-408 (GQDP…KKRD). A phosphoserine mark is found at S128 and S130. Composition is skewed to basic and acidic residues over residues 222–236 (RSAE…ESIR), 245–257 (HQEE…REGT), and 274–283 (LKNREHVDRS). Residues 340–354 (EEDLNTEDEEVEEAL) are compositionally biased toward acidic residues. Residues 358–372 (GTREAESRSCSDQKR) are compositionally biased toward basic and acidic residues. Residues 398–408 (KAKKKKQKKRD) are compositionally biased toward basic residues.

The polypeptide is G patch domain-containing protein 4 (GPATCH4) (Bos taurus (Bovine)).